We begin with the raw amino-acid sequence, 100 residues long: NADH-quinone oxidoreductase subunit K (100 aa).

3 helical membrane passes run 4–24, 28–48, and 60–80; these read LTHGLILAAILFVLGLTGLVI, LLFMLIGLEIMINASALAFVV, and VMYILAISLAAAEASIGLALL.

This sequence belongs to the complex I subunit 4L family. As to quaternary structure, NDH-1 is composed of 13 different subunits. Subunits NuoA, H, J, K, L, M, N constitute the membrane sector of the complex.

It is found in the cell inner membrane. It carries out the reaction a quinone + NADH + 5 H(+)(in) = a quinol + NAD(+) + 4 H(+)(out). In terms of biological role, NDH-1 shuttles electrons from NADH, via FMN and iron-sulfur (Fe-S) centers, to quinones in the respiratory chain. The immediate electron acceptor for the enzyme in this species is believed to be ubiquinone. Couples the redox reaction to proton translocation (for every two electrons transferred, four hydrogen ions are translocated across the cytoplasmic membrane), and thus conserves the redox energy in a proton gradient. This Salmonella agona (strain SL483) protein is NADH-quinone oxidoreductase subunit K.